The following is a 1222-amino-acid chain: MLVGQGAGPLGPAVVTAAVVLLLSGVGPAHGSEDIVVGCGGFVKSDVEINYSLIEIKLYTKHGTLKYQTDCAPNNGYFMIPLYDKGDFILKIEPPLGWSFEPTTVELHVDGVSDICTKGGDINFVFTGFSVNGKVLSKGQPLGPAGVQVSLRNTGTEAKIQSTVTQPGGKFAFFKVLPGDYEILATHPTWALKEASTTVRVTNSNANAASPLIVAGYNVSGSVRSDGEPMKGVKFLLFSSLVTKEDVLGCNVSPVPGFQPQDESLVYLCYTVSREDGSFSFYSLPSGGYTVIPFYRGERITFDVAPSRLDFTVEHDSLKIEPVFHVMGFSVTGRVLNGPEGDGVPEAVVTLNNQIKVKTKADGSFRLENITTGTYTIHAQKEHLYFETVTIKIAPNTPQLADIVATGFSVCGQISIIRFPDTVKQMNKYKVVLSSQDKDKSLVTVETDAHGSFCFKANPGTYKVQVMVPEAETRAGLTLKPQTFPLTVTDRPVMDVAFVQFLASVSGKVSCLDTCGDLLVTLQSLSRQGEKRSLQLSGKVNAMTFTFDNVLPGKYKISIMHEDWCWKNKSLEVEVLEDDVSAVEFRQTGYMLRCSLSHAITLEFYQDGNGRENVGIYNLSKGVNRFCLSKPGVYKVTPRSCHRFEQAFYTYDTSSPSILTLTAIRHHVLGTITTDKMMDVTVTIKSSIDSEPALVLGPLKSVQELRREQQLAEIEARRQEREKNGNEEGEERMTKPPVQEMVDELQGPFSYDFSYWARSGEKITVTPSSKELLFYPPSMEAVVSGESCPGKLIEIHGKAGLFLEGQIHPELEGVEIVISEKGASSPLITVFTDDKGAYSVGPLHSDLEYTVTSQKEGYVLTAVEGTIGDFKAYALAGVSFEIKAEDDQPLPGVLLSLSGGLFRSNLLTQDNGILTFSNLSPGQYYFKPMMKEFRFEPSSQMIEVQEGQNLKITITGYRTAYSCYGTVSSLNGEPEQGVAMEAVGQNDCSIYGEDTVTDEEGKFRLRGLLPGCVYHVQLKAEGNDHIERALPHHRVIEVGNNDIDDVNIIVFRQINQFDLSGNVITSSEYLPTLWVKLYKSENLDNPIQTVSLGQSLFFHFPPLLRDGENYVVLLDSTLPRSQYDYILPQVSFTAVGYHKHITLIFNPTRKLPEQDIAQGSYIALPLTLLVLLAGYNHDKLIPLLLQLTSRLQGVGALGQAASDNSGPEDAKRQAKKQKTRRT.

The signal sequence occupies residues 1-31 (MLVGQGAGPLGPAVVTAAVVLLLSGVGPAHG). The Extracellular segment spans residues 32-1155 (SEDIVVGCGG…NPTRKLPEQD (1124 aa)). N-linked (GlcNAc...) asparagine glycosylation is found at Asn-50, Asn-218, and Asn-618. The helical transmembrane segment at 1156 to 1176 (IAQGSYIALPLTLLVLLAGYN) threads the bilayer. The Cytoplasmic segment spans residues 1177-1222 (HDKLIPLLLQLTSRLQGVGALGQAASDNSGPEDAKRQAKKQKTRRT). The tract at residues 1198–1222 (GQAASDNSGPEDAKRQAKKQKTRRT) is disordered. Positions 1213-1222 (QAKKQKTRRT) are enriched in basic residues.

In terms of assembly, component of the back of Sec61 (BOS) complex, composed of NCLN/Nicalin, NOMO (NOMO1, NOMO2 or NOMO3) and TMEM147. The BOS complex is part of the multi-pass translocon (MPT) complex, composed of three subcomplexes, the GEL complex (composed of RAB5IF/OPTI and TMCO1), the BOS complex (composed of NCLN/Nicalin, NOMO and TMEM147) and the PAT complex (composed of WDR83OS/Asterix and CCDC47). The MPT complex associates with the SEC61 complex. Due to the strong similarity between NOMO1, NOMO2 and NOMO3, similar interaction pattern probably occur for the three gene copies.

The protein localises to the endoplasmic reticulum membrane. In terms of biological role, component of the multi-pass translocon (MPT) complex that mediates insertion of multi-pass membrane proteins into the lipid bilayer of membranes. The MPT complex takes over after the SEC61 complex: following membrane insertion of the first few transmembrane segments of proteins by the SEC61 complex, the MPT complex occludes the lateral gate of the SEC61 complex to promote insertion of subsequent transmembrane regions. This chain is BOS complex subunit NOMO3 (NOMO3), found in Homo sapiens (Human).